A 207-amino-acid polypeptide reads, in one-letter code: Sodium/potassium-transporting ATPase subunit beta-1-interacting protein 1 (207 aa).

Helical transmembrane passes span 2–22 (GRCS…AAAL), 35–55 (APIL…LGTL), and 62–82 (LILY…IICF). N-linked (GlcNAc...) asparagine glycosylation is present at asparagine 100. The helical transmembrane segment at 147–167 (ALSSALQIFLALFGFVYACYV) threads the bilayer.

Belongs to the NKAIN family. Interacts with atp1b1 C-terminus.

It localises to the cell membrane. This chain is Sodium/potassium-transporting ATPase subunit beta-1-interacting protein 1 (nkain1), found in Xenopus laevis (African clawed frog).